The primary structure comprises 217 residues: Small ribosomal subunit protein uS5 (217 aa).

Residues 49–112 (LEEKVLDVKL…AQAKKNIIRV (64 aa)) form the S5 DRBM domain.

Belongs to the universal ribosomal protein uS5 family. Part of the 30S ribosomal subunit. Contacts protein S4.

With S4 and S12 plays an important role in translational accuracy. The sequence is that of Small ribosomal subunit protein uS5 from Methanocaldococcus jannaschii (strain ATCC 43067 / DSM 2661 / JAL-1 / JCM 10045 / NBRC 100440) (Methanococcus jannaschii).